The chain runs to 183 residues: uncharacterized protein (183 aa).

This is an uncharacterized protein from Acanthamoeba polyphaga (Amoeba).